The following is a 110-amino-acid chain: Flagellar hook-basal body complex protein FliE (110 aa).

Belongs to the FliE family.

The protein resides in the bacterial flagellum basal body. The polypeptide is Flagellar hook-basal body complex protein FliE (Pseudomonas putida (strain W619)).